The chain runs to 1545 residues: Immunoglobulin A1 protease autotransporter (1545 aa).

The N-terminal stretch at 1–25 is a signal peptide; it reads MLNKKFKLNFIALTVAYALTPYTEA. A Peptidase S6 domain is found at 26–336; the sequence is ALVRDDVDYQ…NIYKPEFAEK (311 aa). Residue Ser292 is part of the active site. The segment covering 995 to 1019 has biased composition (polar residues); it reads TVDTTNITTPNNIQADVPSVPSNNE. The interval 995 to 1246 is disordered; it reads TVDTTNITTP…NVEPATTSSN (252 aa). Residues 1036-1046 show a composition bias toward low complexity; that stretch reads TPSETTETVAE. Over residues 1048–1060 the composition is skewed to basic and acidic residues; that stretch reads SKQESKTVEKNEQ. Polar residues predominate over residues 1080-1094; it reads VKANTQTNEVAQSGS. A compositionally biased stretch (basic and acidic residues) spans 1095-1125; sequence ETKETQTTETKETATVEKEEKAKVETEKTQE. Polar residues-rich tracts occupy residues 1129–1145 and 1161–1222; these read VTSQVSPKQEQSETVQP and EPQS…SSNK. Residues 1293–1545 form the Autotransporter domain; the sequence is NNEGQYNVWV…TAELKLSFSF (253 aa).

Its subcellular location is the periplasm. It localises to the secreted. The protein resides in the cell surface. It is found in the cell outer membrane. It catalyses the reaction Cleavage of immunoglobulin A molecules at certain Pro-|-Xaa bonds in the hinge region. No small molecule substrates are known.. Its function is as follows. Virulence factor; cleaves host immunoglobulin A producing intact Fc and Fab fragments. This is Immunoglobulin A1 protease autotransporter (iga) from Haemophilus influenzae.